An 842-amino-acid polypeptide reads, in one-letter code: Protein translocase subunit SecA 1 (842 aa).

ATP is bound by residues Gln-85, Gly-103–Thr-107, and Asp-493. 4 residues coordinate Zn(2+): Cys-824, Cys-826, Cys-835, and His-836.

Belongs to the SecA family. As to quaternary structure, monomer and homodimer. Part of the essential Sec protein translocation apparatus which comprises SecA, SecYEG and auxiliary proteins SecDF. Other proteins may also be involved. Requires Zn(2+) as cofactor.

The protein resides in the cell membrane. It is found in the cytoplasm. It carries out the reaction ATP + H2O + cellular proteinSide 1 = ADP + phosphate + cellular proteinSide 2.. Part of the Sec protein translocase complex. Interacts with the SecYEG preprotein conducting channel. Has a central role in coupling the hydrolysis of ATP to the transfer of proteins into and across the cell membrane, serving as an ATP-driven molecular motor driving the stepwise translocation of polypeptide chains across the membrane. The sequence is that of Protein translocase subunit SecA 1 from Streptococcus agalactiae serotype Ia (strain ATCC 27591 / A909 / CDC SS700).